A 365-amino-acid polypeptide reads, in one-letter code: MFGGLSSWLGLKPPEGAAAEGEEPPSRDGDKLSAGAAPSEESPERPVEPTEEQQQQPPTEDPQFLHQAKGLGNYLYNFASAATKKITESVTETAQTIKKSVEEGKIDDILDKTILGDFQKEQKKFVEEQNTKKSEAAVPPWVESHDEETIQQQILALSADKRNFLRDPPAGVQFNFDFDQMYPVALVMLQEDELLSKMRFALVPKLVKEEVFWRNYFYRISLIKQSAQLTALAAQQQASGKEEKSSNRDDNLPLTEAVRPKTPPVVIKSQLKSQEDEEEISTSPGVSEFVSDAFDTCSLNQEDLRKEMEQLVLDKKQEEATALEEDSTDWEKELQQELQEYEVVAESEKRDENWDKEIEKMLQES.

Residues 1-65 form a disordered region; that stretch reads MFGGLSSWLG…QPPTEDPQFL (65 aa). The segment covering 52-62 has biased composition (low complexity); it reads EQQQQPPTEDP. Residues 172–224 enclose the BSD domain; that stretch reads VQFNFDFDQMYPVALVMLQEDELLSKMRFALVPKLVKEEVFWRNYFYRISLIK. Positions 237–259 are disordered; it reads QASGKEEKSSNRDDNLPLTEAVR. Positions 240-251 are enriched in basic and acidic residues; the sequence is GKEEKSSNRDDN. Phosphothreonine is present on threonine 262. Phosphoserine is present on residues serine 283, serine 298, and serine 327. The segment at 344 to 365 is disordered; that stretch reads VAESEKRDENWDKEIEKMLQES. The segment covering 346–365 has biased composition (basic and acidic residues); it reads ESEKRDENWDKEIEKMLQES.

In terms of assembly, interacts (via phosphorylated form and BSD domain) with AKT1; this interaction is enhanced in a mTORC2-mediated manner in response to epidermal growth factor (EGF) stimulation and activates AKT1. Post-translationally, phosphorylated. Phosphorylation increases in a mTORC2-mediated manner in response to epidermal growth factor (EGF) stimulation. Expressed in the liver, kidney, skeletal muscle and in white and brown adipose tissues. Expressed in the cortex, cerebellum, thalamus, hippocampus, braistem, olfactory bulb, spinal cord and striatum of the brain. Expressed in most neuropil regions containing glutamatergic synaptic terminals. Expressed in the CA1, CA2 and CA3 perikarya of the hippocampus. Expressed in neurons and Purkinje cells (at the protein level).

It localises to the cytoplasm. It is found in the perinuclear region. The protein localises to the golgi apparatus. The protein resides in the perikaryon. Its subcellular location is the cell projection. It localises to the axon. It is found in the dendrite. The protein localises to the growth cone. The protein resides in the presynaptic cell membrane. Its subcellular location is the postsynaptic cell membrane. It localises to the membrane. In terms of biological role, plays a role in adipocyte differentiation by promoting mTORC2-mediated phosphorylation of AKT1 at 'Ser-473' after growth factor stimulation. This chain is Synapse-associated protein 1, found in Mus musculus (Mouse).